A 213-amino-acid chain; its full sequence is Charged multivesicular body protein 2b (213 aa).

At Ala2 the chain carries N-acetylalanine. Positions 25–55 (QRAIIRDRAALEKQEKQLELEIKKMAKIGNK) form a coiled coil. The interval 178 to 202 (MAKAPSAARSLPSASTSKSTISDEE) is disordered. The span at 179-194 (AKAPSAARSLPSASTS) shows a compositional bias: low complexity. Ser199 bears the Phosphoserine mark. Residues 201–211 (EEIERQLKALG) carry the MIT-interacting motif motif.

Belongs to the SNF7 family. In terms of assembly, probable core component of the endosomal sorting required for transport complex III (ESCRT-III). ESCRT-III components are thought to multimerize to form a flat lattice on the perimeter membrane of the endosome. Several assembly forms of ESCRT-III may exist that interact and act sequentially. Interacts with CHMP2A. Interacts with VPS4A. Interacts with VPS4B; the interaction is direct.

It localises to the cytoplasm. It is found in the cytosol. The protein resides in the late endosome membrane. In terms of biological role, probable core component of the endosomal sorting required for transport complex III (ESCRT-III) which is involved in multivesicular bodies (MVBs) formation and sorting of endosomal cargo proteins into MVBs. MVBs contain intraluminal vesicles (ILVs) that are generated by invagination and scission from the limiting membrane of the endosome and mostly are delivered to lysosomes enabling degradation of membrane proteins, such as stimulated growth factor receptors, lysosomal enzymes and lipids. The MVB pathway appears to require the sequential function of ESCRT-O, -I,-II and -III complexes. ESCRT-III proteins mostly dissociate from the invaginating membrane before the ILV is released. The ESCRT machinery also functions in topologically equivalent membrane fission events, such as the terminal stages of cytokinesis and the budding of enveloped viruses (lentiviruses). ESCRT-III proteins are believed to mediate the necessary vesicle extrusion and/or membrane fission activities, possibly in conjunction with the AAA ATPase VPS4. The polypeptide is Charged multivesicular body protein 2b (CHMP2B) (Bos taurus (Bovine)).